Reading from the N-terminus, the 266-residue chain is 22 kDa alpha-zein 8 (266 aa).

An N-terminal signal peptide occupies residues 1-21; it reads MATKILALLALLALFVSATNA.

It belongs to the zein family.

Functionally, zeins are major seed storage proteins. This chain is 22 kDa alpha-zein 8, found in Zea mays (Maize).